The primary structure comprises 355 residues: Uroporphyrinogen decarboxylase (355 aa).

Substrate contacts are provided by residues arginine 27–arginine 31, aspartate 78, tyrosine 155, serine 210, and histidine 328.

The protein belongs to the uroporphyrinogen decarboxylase family. As to quaternary structure, homodimer.

The protein localises to the cytoplasm. The catalysed reaction is uroporphyrinogen III + 4 H(+) = coproporphyrinogen III + 4 CO2. It functions in the pathway porphyrin-containing compound metabolism; protoporphyrin-IX biosynthesis; coproporphyrinogen-III from 5-aminolevulinate: step 4/4. In terms of biological role, catalyzes the decarboxylation of four acetate groups of uroporphyrinogen-III to yield coproporphyrinogen-III. This chain is Uroporphyrinogen decarboxylase, found in Azotobacter vinelandii (strain DJ / ATCC BAA-1303).